The chain runs to 776 residues: Probable E3 ubiquitin-protein ligase HECTD2 (776 aa).

Positions 1–46 are disordered; the sequence is MSEAVRVPSPATPLVVAAPAPEERKGKESEREKLPPIVSAGAGATA. Residues 7 to 20 are compositionally biased toward low complexity; the sequence is VPSPATPLVVAAPA. The residue at position 9 (Ser9) is a Phosphoserine. Over residues 21–34 the composition is skewed to basic and acidic residues; sequence PEERKGKESEREKL. The HECT domain occupies 437–776; sequence KRADLKKKLK…ISNSEGFGLE (340 aa). The active-site Glycyl thioester intermediate is the Cys744.

The enzyme catalyses S-ubiquitinyl-[E2 ubiquitin-conjugating enzyme]-L-cysteine + [acceptor protein]-L-lysine = [E2 ubiquitin-conjugating enzyme]-L-cysteine + N(6)-ubiquitinyl-[acceptor protein]-L-lysine.. It functions in the pathway protein modification; protein ubiquitination. Functionally, E3 ubiquitin-protein ligase which accepts ubiquitin from an E2 ubiquitin-conjugating enzyme in the form of a thioester and then directly transfers the ubiquitin to targeted substrates. In terms of biological role, (Microbial infection) Catalyzes ubiquitination of Botulinum neurotoxin A light chain (LC) of C.botulinum neurotoxin type A (BoNT/A). The protein is Probable E3 ubiquitin-protein ligase HECTD2 of Homo sapiens (Human).